The following is a 210-amino-acid chain: ATP phosphoribosyltransferase (210 aa).

The protein belongs to the ATP phosphoribosyltransferase family. Short subfamily. In terms of assembly, heteromultimer composed of HisG and HisZ subunits.

It is found in the cytoplasm. It catalyses the reaction 1-(5-phospho-beta-D-ribosyl)-ATP + diphosphate = 5-phospho-alpha-D-ribose 1-diphosphate + ATP. It functions in the pathway amino-acid biosynthesis; L-histidine biosynthesis; L-histidine from 5-phospho-alpha-D-ribose 1-diphosphate: step 1/9. Functionally, catalyzes the condensation of ATP and 5-phosphoribose 1-diphosphate to form N'-(5'-phosphoribosyl)-ATP (PR-ATP). Has a crucial role in the pathway because the rate of histidine biosynthesis seems to be controlled primarily by regulation of HisG enzymatic activity. In Synechocystis sp. (strain ATCC 27184 / PCC 6803 / Kazusa), this protein is ATP phosphoribosyltransferase (hisG).